We begin with the raw amino-acid sequence, 511 residues long: Ribose import ATP-binding protein RbsA 3 (511 aa).

2 ABC transporter domains span residues 21–257 (LEMR…VGRD) and 256–511 (RDVE…TGNA). Position 53-60 (53-60 (GENGAGKS)) interacts with ATP.

The protein belongs to the ABC transporter superfamily. Ribose importer (TC 3.A.1.2.1) family. In terms of assembly, the complex is composed of an ATP-binding protein (RbsA), two transmembrane proteins (RbsC) and a solute-binding protein (RbsB).

The protein resides in the cell inner membrane. It carries out the reaction D-ribose(out) + ATP + H2O = D-ribose(in) + ADP + phosphate + H(+). Functionally, part of the ABC transporter complex RbsABC involved in ribose import. Responsible for energy coupling to the transport system. This Rhizobium etli (strain ATCC 51251 / DSM 11541 / JCM 21823 / NBRC 15573 / CFN 42) protein is Ribose import ATP-binding protein RbsA 3.